The sequence spans 196 residues: Ribose 1,5-bisphosphate phosphokinase PhnN (196 aa).

It belongs to the ribose 1,5-bisphosphokinase family.

It catalyses the reaction alpha-D-ribose 1,5-bisphosphate + ATP = 5-phospho-alpha-D-ribose 1-diphosphate + ADP. It functions in the pathway metabolic intermediate biosynthesis; 5-phospho-alpha-D-ribose 1-diphosphate biosynthesis; 5-phospho-alpha-D-ribose 1-diphosphate from D-ribose 5-phosphate (route II): step 3/3. In terms of biological role, catalyzes the phosphorylation of ribose 1,5-bisphosphate to 5-phospho-D-ribosyl alpha-1-diphosphate (PRPP). The chain is Ribose 1,5-bisphosphate phosphokinase PhnN from Psychromonas ingrahamii (strain DSM 17664 / CCUG 51855 / 37).